Reading from the N-terminus, the 150-residue chain is Classical arabinogalactan protein 6 (150 aa).

The first 20 residues, 1 to 20 (MARQFVVLVLLTLTIATAFA), serve as a signal peptide directing secretion. 2 stretches are compositionally biased toward low complexity: residues 19 to 75 (FAAD…SPAA) and 85 to 98 (SASSPSDSAEAPTV). The disordered stretch occupies residues 19-131 (FAADAPSASP…ESPKSGAVTT (113 aa)). Serine 126 carries the GPI-anchor amidated serine lipid modification. The propeptide at 127–150 (GAVTTAKFSVVGTVATVGFFFFSF) is removed in mature form.

Belongs to the classical AGP family. Post-translationally, O-glycosylated on the hydroxyproline residues. Expressed in the anthers.

Its subcellular location is the cell membrane. In terms of biological role, proteoglycan that seems to be implicated in diverse developmental roles such as differentiation, cell-cell recognition, embryogenesis and programmed cell death. Plays an important role during the formation of the nexine layer of the pollen wall. The chain is Classical arabinogalactan protein 6 (AGP6) from Arabidopsis thaliana (Mouse-ear cress).